A 143-amino-acid chain; its full sequence is Transcriptional regulator SlyA (143 aa).

In terms of domain architecture, HTH marR-type spans Glu-2–Lys-135. The segment at residues Gln-49–Glu-72 is a DNA-binding region (H-T-H motif).

This sequence belongs to the SlyA family. As to quaternary structure, homodimer.

In terms of biological role, transcription regulator that can specifically activate or repress expression of target genes. The protein is Transcriptional regulator SlyA of Yersinia pestis (strain Pestoides F).